The following is an 848-amino-acid chain: Leucine--tRNA ligase (848 aa).

The interval 1–21 (MTENTPGTSAPERFDPATADT) is disordered. The 'HIGH' region motif lies at 51 to 61 (PYPSGRIHIGH). The 'KMSKS' region motif lies at 625–629 (KMSKS). Lysine 628 lines the ATP pocket.

It belongs to the class-I aminoacyl-tRNA synthetase family.

It is found in the cytoplasm. It carries out the reaction tRNA(Leu) + L-leucine + ATP = L-leucyl-tRNA(Leu) + AMP + diphosphate. The chain is Leucine--tRNA ligase from Novosphingobium aromaticivorans (strain ATCC 700278 / DSM 12444 / CCUG 56034 / CIP 105152 / NBRC 16084 / F199).